We begin with the raw amino-acid sequence, 588 residues long: Cyclomaltodextrinase (588 aa).

H247 and R326 together coordinate substrate. The active-site Nucleophile is D328. The active-site Proton donor is E357. Residues 423-424 (HD), D468, and R472 contribute to the substrate site.

This sequence belongs to the glycosyl hydrolase 13 family. Exists as a monomer or a homodimer in solution. Homodimer is more active and stable than the monomer.

The catalysed reaction is cyclomaltodextrin + H2O = linear maltodextrin. Its activity is regulated as follows. No metal dependence, but Mn(2+) increases the activity with alpha-cyclodextrin as substrate. No effect on the activity with presence or absence of Ca(2+), Zn(2+), Tween-20 or EDTA. Hydrolyzes alpha-, beta- and gamma-cyclodextrins with the highest activity with alpha-cyclodextrin (cyclomaltohexaose). Pullulan is the preferred substrate from linear substrates. Maltose is a major product of these reactions. Is also able to hydrolyze maltotriose and acarbose, and transglycosylate their hydrolytic products. Major reaction products of maltotriose and of acarbose are maltose and glucose, and glucose and pseudotrisaccharide, respectively. No activity with glucose or maltose as substrate. This is Cyclomaltodextrinase from Geobacillus thermopakistaniensis (strain MAS1).